Consider the following 376-residue polypeptide: Succinyl-diaminopimelate desuccinylase (376 aa).

Residue His-67 coordinates Zn(2+). Asp-69 is a catalytic residue. Residue Asp-100 coordinates Zn(2+). The active-site Proton acceptor is the Glu-134. 3 residues coordinate Zn(2+): Glu-135, Glu-163, and His-349.

The protein belongs to the peptidase M20A family. DapE subfamily. Homodimer. Requires Zn(2+) as cofactor. Co(2+) is required as a cofactor.

The catalysed reaction is N-succinyl-(2S,6S)-2,6-diaminopimelate + H2O = (2S,6S)-2,6-diaminopimelate + succinate. It participates in amino-acid biosynthesis; L-lysine biosynthesis via DAP pathway; LL-2,6-diaminopimelate from (S)-tetrahydrodipicolinate (succinylase route): step 3/3. Functionally, catalyzes the hydrolysis of N-succinyl-L,L-diaminopimelic acid (SDAP), forming succinate and LL-2,6-diaminopimelate (DAP), an intermediate involved in the bacterial biosynthesis of lysine and meso-diaminopimelic acid, an essential component of bacterial cell walls. The protein is Succinyl-diaminopimelate desuccinylase of Proteus mirabilis (strain HI4320).